The primary structure comprises 350 residues: Transmembrane protein 185A (350 aa).

Helical transmembrane passes span 16 to 36, 41 to 61, 81 to 101, 111 to 131, 177 to 197, 211 to 231, and 240 to 260; these read LIYA…DGII, WAVF…ASVG, FKAM…EVLV, FWLL…AACV, ILMS…VLFL, ITMA…EILL, and AFSC…LMAT. A mediates interaction with MAP1B region spans residues 298–350; it reads DLHHEDNEETEETPVPEPPKIAPMFRKKARVVITQSPGKYVLPPPKLNIEMPD.

This sequence belongs to the TMEM185 family. As to quaternary structure, interacts with MAP1B.

It localises to the cell projection. It is found in the dendrite. The protein localises to the membrane. The chain is Transmembrane protein 185A (TMEM185A) from Homo sapiens (Human).